A 352-amino-acid polypeptide reads, in one-letter code: MALRKCGNLFVARLAGTSTRAASTMTVRDALNQAMDEEIKRDDRVFLMGEEVAQYDGAYKISKGLWKKHGDKRVVDTPITEMGFAGIAVGAAFAGLRPICEFMTFNFSMQAIDQIINSAAKTYYMSAGRVPVPIVFRGPNGAAAGVAAQHSQDFSAWYAHCPGLKVVCPYSAEDAKGLLKAAIRDDNPVVFLENEILYGQSFPVGDEVLSDDFVVPIGKAKIERAGDHVTIVSYSRGVEFSLEAAKQLEAIGVSAEVINLRSLRPFDFESIRQSVHKTHHLVSVETGWPFAGIGSEIAAQVMESDVFDQLDAPLLRVTGVDVPMPYTQTLEAAALPTAEHVVKAVKKSLNIA.

A mitochondrion-targeting transit peptide spans 1-21 (MALRKCGNLFVARLAGTSTRA). Glu-81 provides a ligand contact to thiamine diphosphate. K(+) contacts are provided by Ile-134, Ala-182, Ile-183, Asp-185, and Asn-187.

Tetramer of 2 alpha and 2 beta subunits. Requires thiamine diphosphate as cofactor.

The protein localises to the mitochondrion matrix. The enzyme catalyses N(6)-[(R)-lipoyl]-L-lysyl-[protein] + pyruvate + H(+) = N(6)-[(R)-S(8)-acetyldihydrolipoyl]-L-lysyl-[protein] + CO2. In terms of biological role, the pyruvate dehydrogenase complex catalyzes the overall conversion of pyruvate to acetyl-CoA and CO(2). It contains multiple copies of three enzymatic components: pyruvate dehydrogenase (E1), dihydrolipoamide acetyltransferase (E2) and lipoamide dehydrogenase (E3). In Caenorhabditis elegans, this protein is Pyruvate dehydrogenase E1 component subunit beta, mitochondrial (pdhb-1).